A 477-amino-acid chain; its full sequence is Glycogen synthase (477 aa).

An ADP-alpha-D-glucose-binding site is contributed by Lys-15.

The protein belongs to the glycosyltransferase 1 family. Bacterial/plant glycogen synthase subfamily.

It carries out the reaction [(1-&gt;4)-alpha-D-glucosyl](n) + ADP-alpha-D-glucose = [(1-&gt;4)-alpha-D-glucosyl](n+1) + ADP + H(+). It participates in glycan biosynthesis; glycogen biosynthesis. Its function is as follows. Synthesizes alpha-1,4-glucan chains using ADP-glucose. This chain is Glycogen synthase, found in Shigella boydii serotype 18 (strain CDC 3083-94 / BS512).